Here is a 213-residue protein sequence, read N- to C-terminus: Redox-sensing transcriptional repressor Rex (213 aa).

Residues 18-57 constitute a DNA-binding region (H-T-H motif); it reads LYYRFVNTLKSKGIDRVNSKAISEGLNIDSATIRRDFSYF. 92-97 serves as a coordination point for NAD(+); that stretch reads GVGNLG.

The protein belongs to the transcriptional regulatory Rex family. Homodimer.

The protein localises to the cytoplasm. Functionally, modulates transcription in response to changes in cellular NADH/NAD(+) redox state. In Staphylococcus saprophyticus subsp. saprophyticus (strain ATCC 15305 / DSM 20229 / NCIMB 8711 / NCTC 7292 / S-41), this protein is Redox-sensing transcriptional repressor Rex.